Here is a 554-residue protein sequence, read N- to C-terminus: Glucose-6-phosphate isomerase (554 aa).

The active-site Proton donor is the glutamate 358. Catalysis depends on residues histidine 389 and lysine 515.

The protein belongs to the GPI family.

It is found in the cytoplasm. It carries out the reaction alpha-D-glucose 6-phosphate = beta-D-fructose 6-phosphate. It functions in the pathway carbohydrate biosynthesis; gluconeogenesis. It participates in carbohydrate degradation; glycolysis; D-glyceraldehyde 3-phosphate and glycerone phosphate from D-glucose: step 2/4. Catalyzes the reversible isomerization of glucose-6-phosphate to fructose-6-phosphate. In Mycobacterium leprae (strain Br4923), this protein is Glucose-6-phosphate isomerase.